Consider the following 502-residue polypeptide: Putative diacyglycerol O-acyltransferase Rv1760 (502 aa).

Catalysis depends on His174, which acts as the Proton acceptor.

The protein belongs to the long-chain O-acyltransferase family.

The enzyme catalyses an acyl-CoA + a 1,2-diacyl-sn-glycerol = a triacyl-sn-glycerol + CoA. It carries out the reaction di-(9Z)-octadecenoylglycerol + (9Z)-octadecenoyl-CoA = 1,2,3-tri-(9Z-octadecenoyl)-glycerol + CoA. It participates in glycerolipid metabolism; triacylglycerol biosynthesis. Catalyzes the terminal and only committed step in triacylglycerol synthesis by using diacylglycerol and fatty acyl CoA as substrates. Required for storage lipid synthesis. In terms of biological role, upon expression in E.coli functions weakly as a triacylglycerol synthase, making triacylglycerol (TG) from diolein and long-chain fatty acyl-CoA. Has very weak wax synthase activity, incorporating palmityl alcohol into wax esters in the presence of palmitoyl-CoA. The chain is Putative diacyglycerol O-acyltransferase Rv1760 from Mycobacterium tuberculosis (strain ATCC 25618 / H37Rv).